We begin with the raw amino-acid sequence, 345 residues long: Probable dual-specificity RNA methyltransferase RlmN (345 aa).

The Proton acceptor role is filled by E93. Residues 99–326 (DDERATLCIS…TTIRASRGED (228 aa)) enclose the Radical SAM core domain. A disulfide bond links C106 and C331. Residues C113, C117, and C120 each coordinate [4Fe-4S] cluster. Residues 158-159 (GE), S190, 212-214 (SLH), and H288 each bind S-adenosyl-L-methionine. Residue C331 is the S-methylcysteine intermediate of the active site.

This sequence belongs to the radical SAM superfamily. RlmN family. [4Fe-4S] cluster serves as cofactor.

It is found in the cytoplasm. The catalysed reaction is adenosine(2503) in 23S rRNA + 2 reduced [2Fe-2S]-[ferredoxin] + 2 S-adenosyl-L-methionine = 2-methyladenosine(2503) in 23S rRNA + 5'-deoxyadenosine + L-methionine + 2 oxidized [2Fe-2S]-[ferredoxin] + S-adenosyl-L-homocysteine. It carries out the reaction adenosine(37) in tRNA + 2 reduced [2Fe-2S]-[ferredoxin] + 2 S-adenosyl-L-methionine = 2-methyladenosine(37) in tRNA + 5'-deoxyadenosine + L-methionine + 2 oxidized [2Fe-2S]-[ferredoxin] + S-adenosyl-L-homocysteine. Functionally, specifically methylates position 2 of adenine 2503 in 23S rRNA and position 2 of adenine 37 in tRNAs. The chain is Probable dual-specificity RNA methyltransferase RlmN from Bacteroides thetaiotaomicron (strain ATCC 29148 / DSM 2079 / JCM 5827 / CCUG 10774 / NCTC 10582 / VPI-5482 / E50).